The chain runs to 89 residues: Acylphosphatase (89 aa).

Positions 3-89 (QKHLQVFGTV…SEDFSDFKSI (87 aa)) constitute an Acylphosphatase-like domain. Active-site residues include arginine 18 and asparagine 36.

The protein belongs to the acylphosphatase family.

It carries out the reaction an acyl phosphate + H2O = a carboxylate + phosphate + H(+). The protein is Acylphosphatase (acyP) of Staphylococcus haemolyticus (strain JCSC1435).